Here is a 178-residue protein sequence, read N- to C-terminus: Inorganic pyrophosphatase (178 aa).

Residues Lys-30, Arg-44, and Tyr-56 each contribute to the substrate site. Mg(2+)-binding residues include Asp-66, Asp-71, and Asp-103. Substrate is bound at residue Tyr-140.

The protein belongs to the PPase family. In terms of assembly, homohexamer. The cofactor is Mg(2+).

The protein resides in the cytoplasm. The enzyme catalyses diphosphate + H2O = 2 phosphate + H(+). In terms of biological role, catalyzes the hydrolysis of inorganic pyrophosphate (PPi) forming two phosphate ions. In Thermococcus kodakarensis (strain ATCC BAA-918 / JCM 12380 / KOD1) (Pyrococcus kodakaraensis (strain KOD1)), this protein is Inorganic pyrophosphatase.